We begin with the raw amino-acid sequence, 97 residues long: Aspartyl/glutamyl-tRNA(Asn/Gln) amidotransferase subunit C (97 aa).

The interval 68–97 (ETGFTQEEALSNAPQQSQGQFRTPKVVESA) is disordered. Positions 70–88 (GFTQEEALSNAPQQSQGQF) are enriched in polar residues.

This sequence belongs to the GatC family. As to quaternary structure, heterotrimer of A, B and C subunits.

The enzyme catalyses L-glutamyl-tRNA(Gln) + L-glutamine + ATP + H2O = L-glutaminyl-tRNA(Gln) + L-glutamate + ADP + phosphate + H(+). The catalysed reaction is L-aspartyl-tRNA(Asn) + L-glutamine + ATP + H2O = L-asparaginyl-tRNA(Asn) + L-glutamate + ADP + phosphate + 2 H(+). In terms of biological role, allows the formation of correctly charged Asn-tRNA(Asn) or Gln-tRNA(Gln) through the transamidation of misacylated Asp-tRNA(Asn) or Glu-tRNA(Gln) in organisms which lack either or both of asparaginyl-tRNA or glutaminyl-tRNA synthetases. The reaction takes place in the presence of glutamine and ATP through an activated phospho-Asp-tRNA(Asn) or phospho-Glu-tRNA(Gln). This chain is Aspartyl/glutamyl-tRNA(Asn/Gln) amidotransferase subunit C, found in Akkermansia muciniphila (strain ATCC BAA-835 / DSM 22959 / JCM 33894 / BCRC 81048 / CCUG 64013 / CIP 107961 / Muc).